The sequence spans 128 residues: Large ribosomal subunit protein mL55 (128 aa).

Residues 1-33 (MAAVGSLLGRLRQSTVKATGPALRRLHTSSWRA) constitute a mitochondrion transit peptide. The residue at position 85 (serine 85) is a Phosphoserine.

It belongs to the mitochondrion-specific ribosomal protein mL55 family. As to quaternary structure, component of the mitochondrial large ribosomal subunit (mt-LSU). Mature mammalian 55S mitochondrial ribosomes consist of a small (28S) and a large (39S) subunit. The 28S small subunit contains a 12S ribosomal RNA (12S mt-rRNA) and 30 different proteins. The 39S large subunit contains a 16S rRNA (16S mt-rRNA), a copy of mitochondrial valine transfer RNA (mt-tRNA(Val)), which plays an integral structural role, and 52 different proteins.

The protein localises to the mitochondrion. In Homo sapiens (Human), this protein is Large ribosomal subunit protein mL55 (MRPL55).